The chain runs to 1465 residues: DNA polymerase III PolC-type (1465 aa).

An Exonuclease domain is found at 427–583; the sequence is YVVFDVETTG…YDAEATGRLL (157 aa).

This sequence belongs to the DNA polymerase type-C family. PolC subfamily.

The protein localises to the cytoplasm. The catalysed reaction is DNA(n) + a 2'-deoxyribonucleoside 5'-triphosphate = DNA(n+1) + diphosphate. In terms of biological role, required for replicative DNA synthesis. This DNA polymerase also exhibits 3' to 5' exonuclease activity. The chain is DNA polymerase III PolC-type from Streptococcus pyogenes serotype M6 (strain ATCC BAA-946 / MGAS10394).